Consider the following 157-residue polypeptide: Small ribosomal subunit protein uS7 (157 aa).

This sequence belongs to the universal ribosomal protein uS7 family. Part of the 30S ribosomal subunit. Contacts proteins S9 and S11.

Its function is as follows. One of the primary rRNA binding proteins, it binds directly to 16S rRNA where it nucleates assembly of the head domain of the 30S subunit. Is located at the subunit interface close to the decoding center, probably blocks exit of the E-site tRNA. The sequence is that of Small ribosomal subunit protein uS7 from Roseiflexus sp. (strain RS-1).